The chain runs to 210 residues: Synaptosomal-associated protein 25 (210 aa).

Residues 1-23 (MENSVENSMDPRSEQEEMQRCAD) form a disordered region. The span at 9–20 (MDPRSEQEEMQR) shows a compositional bias: basic and acidic residues. 2 t-SNARE coiled-coil homology domains span residues 23–85 (DQIT…LSDL) and 147–209 (DARE…ATKM).

It belongs to the SNAP-25 family.

It localises to the synapse. The protein localises to the synaptosome. It is found in the cell membrane. In terms of biological role, may play an important role in the synaptic function of specific neuronal systems. Associates with proteins involved in vesicle docking and membrane fusion. In Torpedo marmorata (Marbled electric ray), this protein is Synaptosomal-associated protein 25 (snap25).